A 362-amino-acid chain; its full sequence is Porin Omp2b (362 aa).

Positions 1-22 are cleaved as a signal peptide; the sequence is MNIKSLLLGSAAALVAASGAQA.

Belongs to the alphaproteobacteria porin family. In terms of assembly, homotrimer.

The protein resides in the cell outer membrane. In terms of biological role, forms passive diffusion pores that allow small molecular weight hydrophilic materials across the outer membrane. The polypeptide is Porin Omp2b (omp2b) (Brucella abortus (strain S19)).